We begin with the raw amino-acid sequence, 226 residues long: UPF0111 protein HI_1603 (226 aa).

The protein belongs to the UPF0111 family.

The sequence is that of UPF0111 protein HI_1603 from Haemophilus influenzae (strain ATCC 51907 / DSM 11121 / KW20 / Rd).